A 348-amino-acid chain; its full sequence is Protein RecA (348 aa).

64–71 contacts ATP; the sequence is GPESSGKT.

It belongs to the RecA family.

The protein resides in the cytoplasm. Can catalyze the hydrolysis of ATP in the presence of single-stranded DNA, the ATP-dependent uptake of single-stranded DNA by duplex DNA, and the ATP-dependent hybridization of homologous single-stranded DNAs. It interacts with LexA causing its activation and leading to its autocatalytic cleavage. The chain is Protein RecA from Blastochloris viridis (Rhodopseudomonas viridis).